A 546-amino-acid chain; its full sequence is Chaperonin GroEL 5 (546 aa).

ATP contacts are provided by residues 30–33, Lys-51, 87–91, Gly-415, and Asp-495; these read TLGP and DGTTT.

Belongs to the chaperonin (HSP60) family. Forms a cylinder of 14 subunits composed of two heptameric rings stacked back-to-back. Interacts with the co-chaperonin GroES.

Its subcellular location is the cytoplasm. The enzyme catalyses ATP + H2O + a folded polypeptide = ADP + phosphate + an unfolded polypeptide.. Together with its co-chaperonin GroES, plays an essential role in assisting protein folding. The GroEL-GroES system forms a nano-cage that allows encapsulation of the non-native substrate proteins and provides a physical environment optimized to promote and accelerate protein folding. This is Chaperonin GroEL 5 from Paraburkholderia xenovorans (strain LB400).